An 847-amino-acid chain; its full sequence is Alanine--tRNA ligase (847 aa).

Positions 554, 558, 656, and 660 each coordinate Zn(2+).

The protein belongs to the class-II aminoacyl-tRNA synthetase family. Zn(2+) serves as cofactor.

It is found in the cytoplasm. It catalyses the reaction tRNA(Ala) + L-alanine + ATP = L-alanyl-tRNA(Ala) + AMP + diphosphate. Functionally, catalyzes the attachment of alanine to tRNA(Ala) in a two-step reaction: alanine is first activated by ATP to form Ala-AMP and then transferred to the acceptor end of tRNA(Ala). Also edits incorrectly charged Ser-tRNA(Ala) and Gly-tRNA(Ala) via its editing domain. This chain is Alanine--tRNA ligase, found in Helicobacter acinonychis (strain Sheeba).